Consider the following 379-residue polypeptide: Cytochrome b (379 aa).

The next 4 membrane-spanning stretches (helical) occupy residues 33 to 53 (FGSLLGLCLISQILTGLFLAM), 77 to 98 (WLIRNLHANGASFFFICLYLHI), 113 to 133 (WNIGVVLFLLVMMTAFVGYVL), and 178 to 198 (FFAFHFLFPFVVAGATMIHLL). Residues H83 and H97 each coordinate heme b. The heme b site is built by H182 and H196. Residue H201 participates in a ubiquinone binding. A run of 4 helical transmembrane segments spans residues 226-246 (YKDLLGFIIMLTALTMLALFY), 288-308 (LGGVLALLSSILVLMVVPILH), 320-340 (ASQLLFWILVADMLVLTWIGG), and 347-367 (YIIIGQVASVLYFSLFLVLNP).

The protein belongs to the cytochrome b family. As to quaternary structure, the cytochrome bc1 complex contains 3 respiratory subunits (MT-CYB, CYC1 and UQCRFS1), 2 core proteins (UQCRC1 and UQCRC2) and probably 6 low-molecular weight proteins. Heme b is required as a cofactor.

The protein resides in the mitochondrion inner membrane. Its function is as follows. Component of the ubiquinol-cytochrome c reductase complex (complex III or cytochrome b-c1 complex) that is part of the mitochondrial respiratory chain. The b-c1 complex mediates electron transfer from ubiquinol to cytochrome c. Contributes to the generation of a proton gradient across the mitochondrial membrane that is then used for ATP synthesis. The sequence is that of Cytochrome b (mt-cyb) from Anguilla reinhardtii (Speckled longfin eel).